Reading from the N-terminus, the 212-residue chain is Chloramphenicol acetyltransferase (212 aa).

The Proton acceptor role is filled by His186.

It belongs to the chloramphenicol acetyltransferase family. In terms of assembly, homotrimer.

It carries out the reaction chloramphenicol + acetyl-CoA = chloramphenicol 3-acetate + CoA. Functionally, this enzyme is an effector of chloramphenicol resistance in bacteria. The sequence is that of Chloramphenicol acetyltransferase (catD) from Clostridioides difficile (Peptoclostridium difficile).